Reading from the N-terminus, the 291-residue chain is E3 ubiquitin-protein ligase MARCHF8 (291 aa).

The segment at 22-72 (YRSKTKEKEREEQNEKTLGHFMSHSSNISKAGSPPSASAPAPVSSFSRTSI) is disordered. The segment covering 25-39 (KTKEKEREEQNEKTL) has biased composition (basic and acidic residues). The span at 50–72 (SKAGSPPSASAPAPVSSFSRTSI) shows a compositional bias: low complexity. The RING-CH-type zinc finger occupies 72-133 (ITPSSQDICR…ELCKYEFIME (62 aa)). Zn(2+)-binding residues include Cys-80, Cys-83, Cys-97, Cys-99, His-107, Cys-110, Cys-123, and Cys-126. The next 2 helical transmembrane spans lie at 157–177 (CSVTFHVIAITCVVWSLYVLI) and 197–217 (FWTKLVVVAIGFTGGLLFMYV). Ser-253 bears the Phosphoserine mark.

As to quaternary structure, interacts with CD86. Broadly expressed. Present in immature dendritic cells (at protein level).

Its subcellular location is the golgi apparatus membrane. The protein resides in the endoplasmic reticulum membrane. It is found in the cytoplasmic vesicle membrane. The protein localises to the lysosome membrane. It localises to the early endosome membrane. It carries out the reaction S-ubiquitinyl-[E2 ubiquitin-conjugating enzyme]-L-cysteine + [acceptor protein]-L-lysine = [E2 ubiquitin-conjugating enzyme]-L-cysteine + N(6)-ubiquitinyl-[acceptor protein]-L-lysine.. It participates in protein modification; protein ubiquitination. Functionally, E3 ubiquitin-protein ligase that plays several important roles in innate immunity and adaptive immunity. Mediates ubiquitination of CD86 and MHC class II proteins, such as HLA-DR alpha and beta, and promotes their subsequent endocytosis and sorting to lysosomes via multivesicular bodies. Possesses a very broad antiviral activity by specifically inactivating different viral fusion proteins. Targets and ubiquitinates cytoplasmic lysine residues of viral envelope glycoproteins with single transmembrane domains leading to their lysosomal degradation. Therefore, shows broad-spectrum inhibition against many viruses including retroviruses, rhabdoviruses, arenaviruses, sarbecoviruses or influenzaviruses. Strongly blocks human immunodeficiency virus type 1 envelope glycoprotein incorporation into virions by down-regulating its cell surface expression. Also blocks ebola virus glycoprotein/GP incorporation via surface down-regulation. Mediates 'Lys-63'-linked polyubiquitination of influenza M2 to target it to lysosome for degradation. Mediates the regulation of constitutive ubiquitination and trafficking of the viral restriction factor BST2 within the endocytic pathway. Plays a role in maintenance of immune tolerance to self by promoting the turnover and proteasomal degradation of PD-L1/CD274 via ubiquitination. Catalyzes the 'Lys-63'-linked polyubiquitylation of cGAS thereby inhibiting its DNA binding ability and impairing its antiviral innate immunity. Negatively regulates IL7-mediated T-cell homeostasis by mediating 'Lys-27'-linked polyubiquitination of IL7R, leading to its lysosomal degradation. In terms of biological role, (Microbial infection) Mediates 'Lys-63'-linked polyubiquitination of hepatitis C virus/HCV protein NS2 which allows its binding to HGS, an ESCRT-0 complex component, and this interaction is essential for HCV envelopment. In Homo sapiens (Human), this protein is E3 ubiquitin-protein ligase MARCHF8.